Reading from the N-terminus, the 123-residue chain is Large ribosomal subunit protein uL24 (123 aa).

This sequence belongs to the universal ribosomal protein uL24 family. As to quaternary structure, part of the 50S ribosomal subunit.

One of two assembly initiator proteins, it binds directly to the 5'-end of the 23S rRNA, where it nucleates assembly of the 50S subunit. Its function is as follows. One of the proteins that surrounds the polypeptide exit tunnel on the outside of the subunit. The polypeptide is Large ribosomal subunit protein uL24 (Solibacter usitatus (strain Ellin6076)).